The chain runs to 508 residues: Pancreatic alpha-amylase 2a5 (508 aa).

An N-terminal signal peptide occupies residues 1–15 (MKFVLLLSLIGFCWA). Position 16 is a pyrrolidone carboxylic acid (Gln-16). 3 disulfides stabilise this stretch: Cys-43–Cys-101, Cys-85–Cys-130, and Cys-156–Cys-172. The Ca(2+) site is built by Asn-115, Arg-170, and Asp-179. Arg-207 provides a ligand contact to chloride. Asp-209 acts as the Nucleophile in catalysis. His-213 contributes to the Ca(2+) binding site. The active-site Proton donor is the Glu-245. Chloride contacts are provided by Asn-310 and Arg-349. Cystine bridges form between Cys-390–Cys-396 and Cys-462–Cys-474.

It belongs to the glycosyl hydrolase 13 family. In terms of assembly, monomer. Ca(2+) serves as cofactor. The cofactor is chloride.

It localises to the secreted. Its subcellular location is the extracellular space. The enzyme catalyses Endohydrolysis of (1-&gt;4)-alpha-D-glucosidic linkages in polysaccharides containing three or more (1-&gt;4)-alpha-linked D-glucose units.. The protein is Pancreatic alpha-amylase 2a5 of Mus musculus (Mouse).